A 218-amino-acid polypeptide reads, in one-letter code: Small ribosomal subunit protein uS3 (218 aa).

A KH type-2 domain is found at 38-106 (IRTFLKKKLY…KLVVDIKEVK (69 aa)).

The protein belongs to the universal ribosomal protein uS3 family. Part of the 30S ribosomal subunit. Forms a tight complex with proteins S10 and S14.

Its function is as follows. Binds the lower part of the 30S subunit head. Binds mRNA in the 70S ribosome, positioning it for translation. This Agathobacter rectalis (strain ATCC 33656 / DSM 3377 / JCM 17463 / KCTC 5835 / VPI 0990) (Eubacterium rectale) protein is Small ribosomal subunit protein uS3.